The sequence spans 204 residues: Cysteine-rich protein 3 (204 aa).

Positions 3–64 constitute an LIM zinc-binding 1 domain; the sequence is WTCPRCQQPV…KPCYGALFGP (62 aa). Positions 88–107 are disordered; it reads ISLSPSNFSPPRPRTGLSRA. The LIM zinc-binding 2 domain occupies 122–183; the sequence is SLCPGCGDPV…IPCYGYLFGP (62 aa).

In terms of tissue distribution, expressed specifically by the thymus.

It localises to the cytoplasm. The polypeptide is Cysteine-rich protein 3 (Crip3) (Mus musculus (Mouse)).